Here is a 132-residue protein sequence, read N- to C-terminus: Small ribosomal subunit protein uS8 (132 aa).

This sequence belongs to the universal ribosomal protein uS8 family. As to quaternary structure, part of the 30S ribosomal subunit. Contacts proteins S5 and S12.

One of the primary rRNA binding proteins, it binds directly to 16S rRNA central domain where it helps coordinate assembly of the platform of the 30S subunit. The polypeptide is Small ribosomal subunit protein uS8 (Borreliella afzelii (strain PKo) (Borrelia afzelii)).